The primary structure comprises 241 residues: Small ribosomal subunit protein uS2 (241 aa).

This sequence belongs to the universal ribosomal protein uS2 family.

The polypeptide is Small ribosomal subunit protein uS2 (Glaesserella parasuis serovar 5 (strain SH0165) (Haemophilus parasuis)).